Here is a 507-residue protein sequence, read N- to C-terminus: MSSTETYEPLLTRLHSDSQITERSSPEIEEFLRRRGSTVTPRWWLKLAVWESKLLWTLSGASIVVSVLNYMLSFVTVMFTGHLGSLQLAGASIATVGIQGLAYGIMLGMASAVQTVCGQAYGARQYSSMGIICQRAMVLHLAAAVFLTFLYWYSGPILKTMGQSVAIAHEGQIFARGMIPQIYAFALACPMQRFLQAQNIVNPLAYMSLGVFLLHTLLTWLVTNVLDFGLLGAALILSFSWWLLVAVNGMYILMSPNCKETWTGFSTRAFRGIWPYFKLTVASAVMLCLEIWYNQGLVIISGLLSNPTISLDAISICMYYLNWDMQFMLGLSAAISVRVSNELGAGNPRVAMLSVVVVNITTVLISSVLCVIVLVFRVGLSKAFTSDAEVIAAVSDLFPLLAVSIFLNGIQPILSGVAIGSGWQAVVAYVNLVTYYVIGLPIGCVLGFKTSLGVAGIWWGMIAGVILQTLTLIVLTLKTNWTSEVENAAQRVKTSATENQEMANAGV.

Residues 1-62 (MSSTETYEPL…KLLWTLSGAS (62 aa)) lie on the Cytoplasmic side of the membrane. A helical membrane pass occupies residues 63 to 83 (IVVSVLNYMLSFVTVMFTGHL). The Vacuolar segment spans residues 84–92 (GSLQLAGAS). Residues 93 to 113 (IATVGIQGLAYGIMLGMASAV) form a helical membrane-spanning segment. The Cytoplasmic segment spans residues 114–137 (QTVCGQAYGARQYSSMGIICQRAM). The helical transmembrane segment at 138-158 (VLHLAAAVFLTFLYWYSGPIL) threads the bilayer. Residues 159 to 170 (KTMGQSVAIAHE) lie on the Vacuolar side of the membrane. A helical membrane pass occupies residues 171 to 191 (GQIFARGMIPQIYAFALACPM). Residues 192-202 (QRFLQAQNIVN) are Cytoplasmic-facing. The helical transmembrane segment at 203 to 223 (PLAYMSLGVFLLHTLLTWLVT) threads the bilayer. Position 224 (N224) is a topological domain, vacuolar. The chain crosses the membrane as a helical span at residues 225–245 (VLDFGLLGAALILSFSWWLLV). Over 246-283 (AVNGMYILMSPNCKETWTGFSTRAFRGIWPYFKLTVAS) the chain is Cytoplasmic. Residues 284–304 (AVMLCLEIWYNQGLVIISGLL) form a helical membrane-spanning segment. Topologically, residues 305-312 (SNPTISLD) are vacuolar. A helical transmembrane segment spans residues 313 to 333 (AISICMYYLNWDMQFMLGLSA). Residues 334–355 (AISVRVSNELGAGNPRVAMLSV) lie on the Cytoplasmic side of the membrane. A helical transmembrane segment spans residues 356–376 (VVVNITTVLISSVLCVIVLVF). The Vacuolar portion of the chain corresponds to 377–389 (RVGLSKAFTSDAE). Residues 390-410 (VIAAVSDLFPLLAVSIFLNGI) traverse the membrane as a helical segment. Over 411-425 (QPILSGVAIGSGWQA) the chain is Cytoplasmic. The chain crosses the membrane as a helical span at residues 426–446 (VVAYVNLVTYYVIGLPIGCVL). Residues 447–453 (GFKTSLG) are Vacuolar-facing. Residues 454 to 474 (VAGIWWGMIAGVILQTLTLIV) traverse the membrane as a helical segment. The Cytoplasmic segment spans residues 475–507 (LTLKTNWTSEVENAAQRVKTSATENQEMANAGV).

Belongs to the multi antimicrobial extrusion (MATE) (TC 2.A.66.1) family. Expressed in reproductive tissues, from buds to siliques. Restricted to the endothelium layer of the ovule and the seed coat.

It is found in the vacuole membrane. Its pathway is secondary metabolite biosynthesis; flavonoid biosynthesis. Functionally, acts as a flavonoid/H(+)-antiporter that control the vacuolar sequestration of flavonoids in the seed coat endothelium. Could transport the anthocyanin cyanidin-3-O-glucoside and epicatechin 3'-O-glucoside in vitro. The polypeptide is Protein DETOXIFICATION 41 (Arabidopsis thaliana (Mouse-ear cress)).